Here is a 114-residue protein sequence, read N- to C-terminus: Cytochrome c2 (114 aa).

Residue Gln-1 is modified to Pyrrolidone carboxylic acid. Residues Cys-13, Cys-16, His-17, and Met-93 each coordinate heme c.

The protein belongs to the cytochrome c family. In terms of processing, binds 1 heme c group covalently per subunit.

The protein resides in the periplasm. Functionally, cytochrome c2 is found mainly in purple, non-sulfur, photosynthetic bacteria where it functions as the electron donor to the oxidized bacteriochlorophyll in the photophosphorylation pathway. However, it may also have a role in the respiratory chain and is found in some non-photosynthetic bacteria. The sequence is that of Cytochrome c2 from Rhodopseudomonas palustris.